Reading from the N-terminus, the 183-residue chain is Capsid protein (183 aa).

The segment at 136 to 183 is disordered; that stretch reads NAPILSTLPETTVVRQRGRAPRRRTPSPRRRRSQSPRRRRSQSPASQC. A compositionally biased stretch (basic residues) spans 151-176; that stretch reads QRGRAPRRRTPSPRRRRSQSPRRRRS. A 1; half-length repeat occupies 155–161; that stretch reads APRRRTP. A 3 X 8 AA repeats of S-P-R-R-R-[PR]-S-Q region spans residues 155–177; sequence APRRRTPSPRRRRSQSPRRRRSQ. The Bipartite nuclear localization signal motif lies at 158–175; that stretch reads RRTPSPRRRRSQSPRRRR. Residues Ser162 and Ser170 each carry the phosphoserine; by host modification. A run of 2 repeats spans residues 162–169 and 170–177. An RNA binding region spans residues 177-183; sequence QSPASQC.

It belongs to the orthohepadnavirus core antigen family. In terms of assembly, homodimerizes, then multimerizes. Interacts with cytosol exposed regions of viral L glycoprotein present in the reticulum-to-Golgi compartment. Interacts with human FLNB. Phosphorylated form interacts with host importin alpha; this interaction depends on the exposure of the NLS, which itself depends upon genome maturation and/or phosphorylation of the capsid protein. Interacts with host NUP153. Phosphorylated by host SRPK1, SRPK2, and maybe protein kinase C or GAPDH. Phosphorylation is critical for pregenomic RNA packaging. Protein kinase C phosphorylation is stimulated by HBx protein and may play a role in transport of the viral genome to the nucleus at the late step during the viral replication cycle.

It localises to the virion. The protein localises to the host cytoplasm. Self assembles to form an icosahedral capsid. Most capsids appear to be large particles with an icosahedral symmetry of T=4 and consist of 240 copies of capsid protein, though a fraction forms smaller T=3 particles consisting of 180 capsid proteins. Entering capsids are transported along microtubules to the nucleus. Phosphorylation of the capsid is thought to induce exposure of nuclear localization signal in the C-terminal portion of the capsid protein that allows binding to the nuclear pore complex via the importin (karyopherin-) alpha and beta. Capsids are imported in intact form through the nuclear pore into the nuclear basket, where it probably binds NUP153. Only capsids that contain the mature viral genome can release the viral DNA and capsid protein into the nucleoplasm. Immature capsids get stuck in the basket. Capsids encapsulate the pre-genomic RNA and the P protein. Pre-genomic RNA is reverse-transcribed into DNA while the capsid is still in the cytoplasm. The capsid can then either be directed to the nucleus, providing more genomes for transcription, or bud through the endoplasmic reticulum to provide new virions. The polypeptide is Capsid protein (Homo sapiens (Human)).